We begin with the raw amino-acid sequence, 363 residues long: Spermidine/putrescine import ATP-binding protein PotA (363 aa).

One can recognise an ABC transporter domain in the interval 6–236 (VEFKNVIKKY…PINHFVADFI (231 aa)). 38 to 45 (GPSGCGKT) is an ATP binding site.

The protein belongs to the ABC transporter superfamily. Spermidine/putrescine importer (TC 3.A.1.11.1) family. In terms of assembly, the complex is composed of two ATP-binding proteins (PotA), two transmembrane proteins (PotB and PotC) and a solute-binding protein (PotD).

The protein localises to the cell membrane. It catalyses the reaction ATP + H2O + polyamine-[polyamine-binding protein]Side 1 = ADP + phosphate + polyamineSide 2 + [polyamine-binding protein]Side 1.. Part of the ABC transporter complex PotABCD involved in spermidine/putrescine import. Responsible for energy coupling to the transport system. This Latilactobacillus sakei subsp. sakei (strain 23K) (Lactobacillus sakei subsp. sakei) protein is Spermidine/putrescine import ATP-binding protein PotA.